A 124-amino-acid chain; its full sequence is Large ribosomal subunit protein bL12 (124 aa).

Belongs to the bacterial ribosomal protein bL12 family. Homodimer. Part of the ribosomal stalk of the 50S ribosomal subunit. Forms a multimeric L10(L12)X complex, where L10 forms an elongated spine to which 2 to 4 L12 dimers bind in a sequential fashion. Binds GTP-bound translation factors.

Forms part of the ribosomal stalk which helps the ribosome interact with GTP-bound translation factors. Is thus essential for accurate translation. This chain is Large ribosomal subunit protein bL12, found in Desulfitobacterium hafniense (strain DSM 10664 / DCB-2).